Consider the following 361-residue polypeptide: uncharacterized protein (361 aa).

This is an uncharacterized protein from Acanthamoeba polyphaga (Amoeba).